Here is a 34-residue protein sequence, read N- to C-terminus: Surfactant protein C (34 aa).

The S-palmitoyl cysteine moiety is linked to residue Cys4.

The protein resides in the secreted. The protein localises to the extracellular space. Its subcellular location is the surface film. In terms of biological role, pulmonary surfactant associated proteins promote alveolar stability by lowering the surface tension at the air-liquid interface in the peripheral air spaces. In Canis lupus familiaris (Dog), this protein is Surfactant protein C (SFTPC).